The primary structure comprises 150 residues: Non-structural protein (150 aa).

The apoptotic activity stretch occupies residues 93-140 (PLFRIRFLLLIMSDSISLTDITISPGTLYSARTLLLRAAVLALTRKPM).

Its function is as follows. Disrupts the host mitochondrial membrane potential and induces apoptosis probably by inducing host CASP8 and CASP9. The protein is Non-structural protein of Bos taurus (Bovine).